The following is a 291-amino-acid chain: uncharacterized protein (291 aa).

The next 6 helical transmembrane spans lie at 13 to 33 (FDLF…MEMG), 40 to 60 (LGTV…LGFL), 81 to 101 (GFLN…LICI), 128 to 148 (FGLF…RLLL), 158 to 178 (VILG…YLEY), and 220 to 240 (GNVW…ILLA). The N-linked (GlcNAc...) asparagine glycan is linked to asparagine 249. The disordered stretch occupies residues 269–291 (MASEDPPKDPLPRQEGGGGDTIA).

The protein localises to the membrane. This is an uncharacterized protein from Encephalitozoon cuniculi (strain GB-M1) (Microsporidian parasite).